A 677-amino-acid polypeptide reads, in one-letter code: DNA ligase (677 aa).

NAD(+) is bound by residues 32 to 36 (DSEYD), 81 to 82 (SL), and E112. K114 functions as the N6-AMP-lysine intermediate in the catalytic mechanism. NAD(+) is bound by residues R135, E171, K288, and K312. Residues C416, C419, C434, and C439 each contribute to the Zn(2+) site. The 80-residue stretch at 598–677 (YKPLPLSGVE…QEFINMLEQS (80 aa)) folds into the BRCT domain.

Belongs to the NAD-dependent DNA ligase family. LigA subfamily. It depends on Mg(2+) as a cofactor. The cofactor is Mn(2+).

It carries out the reaction NAD(+) + (deoxyribonucleotide)n-3'-hydroxyl + 5'-phospho-(deoxyribonucleotide)m = (deoxyribonucleotide)n+m + AMP + beta-nicotinamide D-nucleotide.. Functionally, DNA ligase that catalyzes the formation of phosphodiester linkages between 5'-phosphoryl and 3'-hydroxyl groups in double-stranded DNA using NAD as a coenzyme and as the energy source for the reaction. It is essential for DNA replication and repair of damaged DNA. The polypeptide is DNA ligase (Dehalococcoides mccartyi (strain ATCC BAA-2266 / KCTC 15142 / 195) (Dehalococcoides ethenogenes (strain 195))).